An 81-amino-acid polypeptide reads, in one-letter code: Translational regulator CsrA (81 aa).

The protein belongs to the CsrA/RsmA family. In terms of assembly, homodimer; the beta-strands of each monomer intercalate to form a hydrophobic core, while the alpha-helices form wings that extend away from the core.

The protein localises to the cytoplasm. Functionally, a translational regulator that binds mRNA to regulate translation initiation and/or mRNA stability. Usually binds in the 5'-UTR at or near the Shine-Dalgarno sequence preventing ribosome-binding, thus repressing translation. Its main target seems to be the major flagellin gene, while its function is anatagonized by FliW. The chain is Translational regulator CsrA from Desulforapulum autotrophicum (strain ATCC 43914 / DSM 3382 / VKM B-1955 / HRM2) (Desulfobacterium autotrophicum).